The primary structure comprises 295 residues: Translational activator of cytochrome c oxidase 1 (295 aa).

Lysine 162 carries the N6-acetyllysine modification. Positions 190–225 (VEDREKKAVNLERALELAIEAGAEDVREAEDEEEEK) form a coiled coil.

It belongs to the TACO1 family.

Its subcellular location is the mitochondrion. Its function is as follows. Acts as a translational activator of mitochondrially-encoded cytochrome c oxidase 1. In Rattus norvegicus (Rat), this protein is Translational activator of cytochrome c oxidase 1.